A 200-amino-acid chain; its full sequence is 3-isopropylmalate dehydratase small subunit (200 aa).

Belongs to the LeuD family. LeuD type 1 subfamily. As to quaternary structure, heterodimer of LeuC and LeuD.

It catalyses the reaction (2R,3S)-3-isopropylmalate = (2S)-2-isopropylmalate. It participates in amino-acid biosynthesis; L-leucine biosynthesis; L-leucine from 3-methyl-2-oxobutanoate: step 2/4. Functionally, catalyzes the isomerization between 2-isopropylmalate and 3-isopropylmalate, via the formation of 2-isopropylmaleate. The polypeptide is 3-isopropylmalate dehydratase small subunit (Edwardsiella ictaluri (strain 93-146)).